Consider the following 599-residue polypeptide: MKHIRNFSIIAHIDHGKSTLSDRIIQICGGLSEREMAAQVLDSMDLERERGITIKAQSVTLDYHAKDGQTYQLNFIDTPGHVDFSYEVSRSLAACEGALLVVDAGQGVEAQTLANCYTAMEMNLEVVPVLNKIDLPAADPERVAEEIEDIVGIDATDAVRCSAKTGVGVPDILERLVRDIPPPQGDPDGPLQALIIDSWFDNYLGVVSLIRIKNGSLRKGDKVKVMSTGQSYNADRLGIFTPKRVDRDVLSCGEVGWLVCAIKDILGAPVGDTLTLARNPAEKSLPGFKKVKPQVYAGLFPISSDDYEAFRDALGKLSLNDASLFYEPESSTALGFGFRCGFLGLLHMEIIQERLEREYDLELITTAPTVVYEVITTAQETVYVDSPSKLPALNNIEELREPIAECHMLLPQEYLGNVITLCIEKRGMQTNMVYHGNQVALTYEIPMAEVVLDFFDRLKSTSRGYASLDYNFKRFQTSDMVRVDVLINNERVDALALITHRDNAQYRGRDLVEKMKELIPRQQFDIAIQAAIGNHIIARSTVKQLRKNVLAKCYGGDVSRKKKLLQKQKDGKKRMKQVGNVELPQEAFLAILHVGKDSK.

Residues 2–184 (KHIRNFSIIA…RLVRDIPPPQ (183 aa)) enclose the tr-type G domain. GTP-binding positions include 14–19 (DHGKST) and 131–134 (NKID).

It belongs to the TRAFAC class translation factor GTPase superfamily. Classic translation factor GTPase family. LepA subfamily.

The protein resides in the cell inner membrane. It carries out the reaction GTP + H2O = GDP + phosphate + H(+). Functionally, required for accurate and efficient protein synthesis under certain stress conditions. May act as a fidelity factor of the translation reaction, by catalyzing a one-codon backward translocation of tRNAs on improperly translocated ribosomes. Back-translocation proceeds from a post-translocation (POST) complex to a pre-translocation (PRE) complex, thus giving elongation factor G a second chance to translocate the tRNAs correctly. Binds to ribosomes in a GTP-dependent manner. The sequence is that of Elongation factor 4 from Yersinia enterocolitica serotype O:8 / biotype 1B (strain NCTC 13174 / 8081).